We begin with the raw amino-acid sequence, 1202 residues long: Stress response protein NST1 (1202 aa).

7 disordered regions span residues 28–217, 236–291, 390–423, 487–543, 579–852, 904–967, and 979–1015; these read RHLN…EDDA, GHYQ…SGSK, RSAP…DDEE, AHPS…RMEE, ELEE…SMLP, PNQA…DSDV, and LLDE…DAPN. A compositionally biased stretch (basic and acidic residues) spans 158-167; the sequence is REKEAAKKAA. Polar residues predominate over residues 178 to 187; sequence NGVSSGSTHL. Positions 204-217 are enriched in acidic residues; that stretch reads PELDDPQYDDEDDA. Positions 252-261 are enriched in basic residues; sequence KKPRKKKKGA. 2 stretches are compositionally biased toward acidic residues: residues 408 to 423 and 504 to 536; these read YDDE…DDEE and PEEE…EAMT. The stretch at 557–704 forms a coiled coil; it reads EQRVLQAYRE…EKKVKDDAKR (148 aa). Residues 579-710 are compositionally biased toward basic and acidic residues; the sequence is ELEEENEKKD…DAKRKERDRA (132 aa). Residues 754-789 are compositionally biased toward polar residues; sequence RPRQTSRQGSHGSSPKTPQVAPGTSKSMSPTSQAQG. Residues 816-828 are compositionally biased toward pro residues; that stretch reads SPMPPIGPPPGLS. The span at 830 to 848 shows a compositional bias: low complexity; the sequence is PPGLSMGLPPGLNGFPGPG. Polar residues predominate over residues 916-926; the sequence is TQHSRQGSGSF. The span at 954–967 shows a compositional bias: basic and acidic residues; sequence KPHDSNKHGQDSDV.

Belongs to the NST1 family.

Its subcellular location is the cytoplasm. May act as a negative regulator of salt tolerance. This chain is Stress response protein NST1 (NST1), found in Phaeosphaeria nodorum (strain SN15 / ATCC MYA-4574 / FGSC 10173) (Glume blotch fungus).